The primary structure comprises 202 residues: GTP cyclohydrolase 1 (202 aa).

Positions 90, 93, and 163 each coordinate Zn(2+).

It belongs to the GTP cyclohydrolase I family. Homomer.

The catalysed reaction is GTP + H2O = 7,8-dihydroneopterin 3'-triphosphate + formate + H(+). The protein operates within cofactor biosynthesis; 7,8-dihydroneopterin triphosphate biosynthesis; 7,8-dihydroneopterin triphosphate from GTP: step 1/1. The chain is GTP cyclohydrolase 1 from Mycobacterium ulcerans (strain Agy99).